Consider the following 337-residue polypeptide: Ketol-acid reductoisomerase (NAD(P)(+)) (337 aa).

One can recognise a KARI N-terminal Rossmann domain in the interval 2–187; sequence ARMFYDADAN…GCTRAGVIET (186 aa). NADP(+) contacts are provided by residues 25–28, R48, and 88–91; these read FGSQ and DEVQ. H113 is an active-site residue. G139 lines the NADP(+) pocket. Positions 188-333 constitute a KARI C-terminal knotted domain; the sequence is SFQEETETDL…AELRGMMPWL (146 aa). Positions 196, 200, 232, and 236 each coordinate Mg(2+). Residue S257 participates in substrate binding.

This sequence belongs to the ketol-acid reductoisomerase family. Mg(2+) is required as a cofactor.

It catalyses the reaction (2R)-2,3-dihydroxy-3-methylbutanoate + NAD(+) = (2S)-2-acetolactate + NADH + H(+). The catalysed reaction is (2R)-2,3-dihydroxy-3-methylbutanoate + NADP(+) = (2S)-2-acetolactate + NADPH + H(+). The protein operates within amino-acid biosynthesis; L-isoleucine biosynthesis; L-isoleucine from 2-oxobutanoate: step 2/4. It functions in the pathway amino-acid biosynthesis; L-valine biosynthesis; L-valine from pyruvate: step 2/4. In terms of biological role, involved in the biosynthesis of branched-chain amino acids (BCAA). Catalyzes an alkyl-migration followed by a ketol-acid reduction of (S)-2-acetolactate (S2AL) to yield (R)-2,3-dihydroxy-isovalerate. In the isomerase reaction, S2AL is rearranged via a Mg-dependent methyl migration to produce 3-hydroxy-3-methyl-2-ketobutyrate (HMKB). In the reductase reaction, this 2-ketoacid undergoes a metal-dependent reduction by NADPH or NADH to yield (R)-2,3-dihydroxy-isovalerate. The polypeptide is Ketol-acid reductoisomerase (NAD(P)(+)) (Syntrophomonas wolfei subsp. wolfei (strain DSM 2245B / Goettingen)).